The sequence spans 137 residues: Large-conductance mechanosensitive channel (137 aa).

2 helical membrane-spanning segments follow: residues 10–30 (FAMRGNVVDLAVGVIIGAAFG) and 76–96 (GVFIQNVFDFVIVAFAIFVAI).

This sequence belongs to the MscL family. As to quaternary structure, homopentamer.

The protein resides in the cell inner membrane. Functionally, channel that opens in response to stretch forces in the membrane lipid bilayer. May participate in the regulation of osmotic pressure changes within the cell. The sequence is that of Large-conductance mechanosensitive channel from Salmonella typhimurium (strain LT2 / SGSC1412 / ATCC 700720).